The primary structure comprises 456 residues: tRNA modification GTPase MnmE (456 aa).

Residues Arg-21, Glu-85, and Lys-124 each contribute to the (6S)-5-formyl-5,6,7,8-tetrahydrofolate site. The 160-residue stretch at 220-379 (QFRIVLYGEP…LLDAIKERTG (160 aa)) folds into the TrmE-type G domain. Position 230 (Asn-230) interacts with K(+). GTP contacts are provided by residues 230 to 235 (NTGKSS), 249 to 255 (SEIPGTT), and 274 to 277 (DTAG). Ser-234 provides a ligand contact to Mg(2+). Ser-249, Ile-251, and Thr-254 together coordinate K(+). Thr-255 lines the Mg(2+) pocket. Position 456 (Lys-456) interacts with (6S)-5-formyl-5,6,7,8-tetrahydrofolate.

The protein belongs to the TRAFAC class TrmE-Era-EngA-EngB-Septin-like GTPase superfamily. TrmE GTPase family. Homodimer. Heterotetramer of two MnmE and two MnmG subunits. It depends on K(+) as a cofactor.

Its subcellular location is the cytoplasm. In terms of biological role, exhibits a very high intrinsic GTPase hydrolysis rate. Involved in the addition of a carboxymethylaminomethyl (cmnm) group at the wobble position (U34) of certain tRNAs, forming tRNA-cmnm(5)s(2)U34. The sequence is that of tRNA modification GTPase MnmE from Leptospira interrogans serogroup Icterohaemorrhagiae serovar copenhageni (strain Fiocruz L1-130).